The following is a 106-amino-acid chain: uncharacterized protein (106 aa).

A helical transmembrane segment spans residues 78-98 (LAITGYVVSIPIVLPILIIFI).

Its subcellular location is the membrane. This is an uncharacterized protein from Haemophilus influenzae (strain ATCC 51907 / DSM 11121 / KW20 / Rd).